Consider the following 396-residue polypeptide: Purine ribonucleoside efflux pump NepI (396 aa).

The Cytoplasmic portion of the chain corresponds to 1 to 21 (MSEFIAENRGADAITRPNWSA). The chain crosses the membrane as a helical span at residues 22–42 (VFSVAFCVACLIIVEFLPVSL). Topologically, residues 43-54 (LTPMAQDLGISE) are periplasmic. A helical transmembrane segment spans residues 55 to 75 (GVAGQSVTVTAFVAMFASLFI). Topologically, residues 76–85 (TQTIQATDRR) are cytoplasmic. The helical transmembrane segment at 86–106 (YVVILFAVLLTLSCLLVSFAN) threads the bilayer. A topological domain (periplasmic) is located at residue Ser-107. The chain crosses the membrane as a helical span at residues 108-128 (FSLLLIGRACLGLALGGFWAI). Over 129–147 (SASLTMRLVPPRTVPKALS) the chain is Cytoplasmic. A helical membrane pass occupies residues 148–168 (VIFGAVSIALVIAAPLGGFLG). The Periplasmic portion of the chain corresponds to 169 to 175 (ELIGWRN). Residues 176-196 (VFNAAAAMGVLCIFWIIKSLP) form a helical membrane-spanning segment. Over 197-215 (SLPGEPSHQKQNTFRLLQR) the chain is Cytoplasmic. A helical transmembrane segment spans residues 216–236 (PGVMAGMIAIFMSFAGQFAFF). At 237–255 (TYIRPVYMNLAGFGVDGLT) the chain is on the periplasmic side. Residues 256-276 (LVLLSFGIASFVGTSLSSFIL) form a helical membrane-spanning segment. The Cytoplasmic segment spans residues 277-281 (KRSVK). Residues 282–302 (LALAGAPFVLALSALVLTLWG) form a helical membrane-spanning segment. Over 303–305 (SDK) the chain is Periplasmic. The chain crosses the membrane as a helical span at residues 306–326 (IVATGVAIIWGLTFALIPVGW). Residues 327 to 343 (STWITRSLADQAEKAGS) are Cytoplasmic-facing. A helical membrane pass occupies residues 344-364 (IQVAVIQLANTCGAAIGGYAL). At 365–366 (DN) the chain is on the periplasmic side. The chain crosses the membrane as a helical span at residues 367–387 (IGLTSPLMLSGTLMLLTALLV). The Cytoplasmic portion of the chain corresponds to 388–396 (TAKVKMKKS).

The protein belongs to the major facilitator superfamily. DHA1 family. NepI (TC 2.A.1.2.26) subfamily.

The protein resides in the cell inner membrane. The enzyme catalyses inosine(in) + H(+)(out) = inosine(out) + H(+)(in). It catalyses the reaction guanosine(in) + H(+)(out) = guanosine(out) + H(+)(in). In terms of biological role, involved in the efflux of purine ribonucleosides, such as inosine and guanosine. The sequence is that of Purine ribonucleoside efflux pump NepI from Escherichia coli O127:H6 (strain E2348/69 / EPEC).